The following is a 148-amino-acid chain: Large ribosomal subunit protein bL9 (148 aa).

The protein belongs to the bacterial ribosomal protein bL9 family.

In terms of biological role, binds to the 23S rRNA. The polypeptide is Large ribosomal subunit protein bL9 (Campylobacter concisus (strain 13826)).